The following is a 499-amino-acid chain: Hexokinase-2, chloroplastic (499 aa).

The N-terminal 30 residues, Met1–Ile30, are a transit peptide targeting the chloroplast. Positions Leu39–Ala490 constitute a Hexokinase domain. Positions Thr94 to Val232 are hexokinase small subdomain. 3 residues coordinate ADP: Gly108, Thr109, and Asn110. 4 residues coordinate D-glucose: Thr198, Lys199, Asn233, and Asp234. The tract at residues Asn233–Asp479 is hexokinase large subdomain. Residue Thr257 participates in ADP binding. D-glucose-binding residues include Asn260, Glu288, and Glu318. An ADP-binding site is contributed by Gly444.

It belongs to the hexokinase family. Expressed in vascular starch sheath, xylem parenchyma, guard cells and root tips.

It localises to the plastid. It is found in the chloroplast stroma. It carries out the reaction a D-hexose + ATP = a D-hexose 6-phosphate + ADP + H(+). The enzyme catalyses D-fructose + ATP = D-fructose 6-phosphate + ADP + H(+). The catalysed reaction is D-glucose + ATP = D-glucose 6-phosphate + ADP + H(+). It participates in carbohydrate metabolism; hexose metabolism. Its pathway is carbohydrate degradation; glycolysis; D-glyceraldehyde 3-phosphate and glycerone phosphate from D-glucose: step 1/4. Fructose and glucose phosphorylating enzyme. This chain is Hexokinase-2, chloroplastic (HXK2), found in Nicotiana tabacum (Common tobacco).